A 157-amino-acid polypeptide reads, in one-letter code: Deoxyuridine 5'-triphosphate nucleotidohydrolase (157 aa).

Substrate is bound by residues 76 to 78, N89, 93 to 95, and K103; these read RSG and TID.

This sequence belongs to the dUTPase family. It depends on Mg(2+) as a cofactor.

The enzyme catalyses dUTP + H2O = dUMP + diphosphate + H(+). The protein operates within pyrimidine metabolism; dUMP biosynthesis; dUMP from dCTP (dUTP route): step 2/2. This enzyme is involved in nucleotide metabolism: it produces dUMP, the immediate precursor of thymidine nucleotides and it decreases the intracellular concentration of dUTP so that uracil cannot be incorporated into DNA. This is Deoxyuridine 5'-triphosphate nucleotidohydrolase from Brucella abortus (strain 2308).